Here is a 599-residue protein sequence, read N- to C-terminus: CAP-Gly domain-containing linker protein 4 (599 aa).

ANK repeat units lie at residues 65-101 (TSVS…NVND), 149-180 (TNMN…DVDA), and 186-215 (NFGT…NPAF). The CAP-Gly 1 domain maps to 303–345 (GTTEFASGQWAGIELDEPEGKNNGSVGRVQYFKCAPKYGIFAP). Positions 387 to 482 (SGLMTSKKEN…TSAANNTHRE (96 aa)) are disordered. The span at 443-462 (LSTSSSSGKKTLSKSPSLPS) shows a compositional bias: low complexity. The segment covering 468–478 (LKSSTTSAANN) has biased composition (polar residues). Positions 505 to 547 (GTTNFAPGYWYGIELEKPHGKNDGSVGGVQYFSCSPRYGIFAP) constitute a CAP-Gly 2 domain. A Phosphoserine modification is found at S557. The disordered stretch occupies residues 565–599 (SSNKQNHSYPGFRRSFSTTSASSQKEINRRNAFAK). A compositionally biased stretch (low complexity) spans 576–587 (FRRSFSTTSASS).

This chain is CAP-Gly domain-containing linker protein 4 (Clip4), found in Rattus norvegicus (Rat).